The following is a 581-amino-acid chain: CUE domain-containing protein 3 (581 aa).

The region spanning 271-314 (INPGDVKSLIELFPQLSVEEAVEHLSASLGNIDAACESVITSSL) is the CUE domain. Tyrosine 386 bears the Phosphotyrosine mark. 2 disordered regions span residues 422–448 (DDTY…ASSK) and 522–581 (GSGN…SNEK). The segment covering 522–542 (GSGNTNIGSLRQTKFKQSNYT) has biased composition (polar residues). The segment covering 552 to 581 (QHRPSRPSKNPSLKKKKYVRTKPKKASNEK) has biased composition (basic residues).

As to quaternary structure, component of the RQT (ribosome quality control trigger) complex.

The protein localises to the cytoplasm. The protein resides in the nucleus. Its function is as follows. Involved in activation of the ribosome quality control (RQC) pathway, a pathway that degrades nascent peptide chains during problematic translation. Specifically recognizes and binds RPS20/uS10 ubiquitinated by HEL2, promoting recruitment of the RQT (ribosome quality control trigger) complex on stalled ribosomes, followed by disassembly of stalled ribosomes. This chain is CUE domain-containing protein 3, found in Schizosaccharomyces pombe (strain 972 / ATCC 24843) (Fission yeast).